The chain runs to 361 residues: Methyltransferase LUC1 (361 aa).

Residues Tyr18, Asn66, Asp89, Ser126, and Phe127 each contribute to the S-adenosyl-L-homocysteine site. Residues Gln156 and Phe233 each contribute to the Mg(2+) site.

It belongs to the methyltransferase superfamily. Type-7 methyltransferase family. It depends on Mg(2+) as a cofactor.

Its pathway is mycotoxin biosynthesis. In terms of biological role, methyltransferase; part of the gene cluster that mediates the biosynthesis of the mycotoxin lucilactaene and the lucilactaene-related compound NG-391 that act as cell cycle inhibitors with potent growth inhibitory activity against malarial parasites, moderate growth inhibitory activity against cancer cells, and no activity against bacteria and fungi. LUC1 performs the last step of the pathway and methylates the hydroxyl group of demethyllucilactaene at C-21 to yeald lucilactaene. The pathway begins with the hybrid PKS-NRPS synthetase LUC5 which is responsible for the condensation of one acetyl-coenzyme A (CoA) unit with six malonyl-CoA units and the amide linkage of the arising heptaketide and homoserine, subsequently releasing the first intermediate prelucilactaene B. Both the cytochrome P450 monooxygenase LUC2 and the hydrolase LUC6 function in parallel in modification of prelucilactaene B. LUC6 may catalyze the 2-pyrrolidone ring formation to form prelucilactaene C from prelucilactaene B, followed by C-15 hydroxylation by the same enzyme to give prelucilactaene D, which is then converted to prelucilactaene E by epoxidation, and finally to prelucilactaene F by cyclization. Prelucilactane D, prelucilactaene E, and prelucilactaene F can be converted to dihydrolucilactaene, NG391, and lucilactaene, respectively, via C-20 methyl group hydroxylation by the cytochrome P450 monooxygenase LUC2. However, LUC2, unlike FUS8 in fusarin C biosynthesis, is not enough for the full oxidation of the C-20 methyl group into carboxylic acid, which is a prerequisite for the final methylation step. The aldehyde dehydrogenase LUC3 is involved in the biosynthesis by further oxidation of the C-20 alcoholic analog prelucilactaene G into a carboxylic derivative. This unidentified carboxylic derivative may be converted to demethyllucilactaene. As the last step, the methyltransferase LUC1 methylates the hydroxyl group at C-21 of demethyllucilactaene to generate lucilactaene. The protein is Methyltransferase LUC1 of Fusarium sp.